A 754-amino-acid chain; its full sequence is Protein tyrosine phosphatase domain-containing protein 1 (754 aa).

The region spanning 82–253 (YSSWVTDNIL…LTPLRNIFSC (172 aa)) is the Tyrosine-protein phosphatase domain. The active-site Phosphocysteine intermediate is the Cys190. 2 positions are modified to phosphoserine: Ser392 and Ser394. Residues 487 to 498 (SGAFSADVSGSH) are compositionally biased toward polar residues. The disordered stretch occupies residues 487 to 554 (SGAFSADVSG…PRSPLDCGSS (68 aa)). Position 547 is a phosphoserine (Ser547).

The protein belongs to the protein-tyrosine phosphatase family. Non-receptor class PTPDC1 subfamily.

May play roles in cilia formation and/or maintenance. The sequence is that of Protein tyrosine phosphatase domain-containing protein 1 (PTPDC1) from Homo sapiens (Human).